A 413-amino-acid polypeptide reads, in one-letter code: Probable Xaa-Pro aminopeptidase UREG_07123 (413 aa).

Mn(2+)-binding residues include aspartate 194, aspartate 205, glutamate 340, and glutamate 379.

Belongs to the peptidase M24B family. Mn(2+) is required as a cofactor.

The enzyme catalyses Release of any N-terminal amino acid, including proline, that is linked to proline, even from a dipeptide or tripeptide.. In terms of biological role, catalyzes the removal of a penultimate prolyl residue from the N-termini of peptides. This is Probable Xaa-Pro aminopeptidase UREG_07123 from Uncinocarpus reesii (strain UAMH 1704).